The following is a 430-amino-acid chain: Cytochrome c biogenesis protein CcsB (430 aa).

Transmembrane regions (helical) follow at residues 14 to 34, 72 to 92, and 162 to 182; these read LRLA…GTIL, SVWF…CSWR, and VGPL…AWGA.

Belongs to the Ccs1/CcsB family. In terms of assembly, may interact with CcsA.

Its subcellular location is the cellular thylakoid membrane. Functionally, required during biogenesis of c-type cytochromes (cytochrome c6 and cytochrome f) at the step of heme attachment. This Synechococcus sp. (strain WH7803) protein is Cytochrome c biogenesis protein CcsB.